The chain runs to 391 residues: Na(+)/H(+) antiporter NhaA (391 aa).

11 consecutive transmembrane segments (helical) span residues 14–34, 47–67, 87–107, 117–137, 146–166, 171–191, 205–225, 252–272, 280–300, 318–338, and 356–376; these read AGGILLVIAAAIAMTIANSPL, FGMSVSHWINDGLMAVFFLLI, IFPAIAAVGGMLAPALIYVAF, GWAIPAATDIAFALGIMALLG, VFLLALAIIDDLGVVVIIALF, LSTMALLVGFAMTGVLFMLNA, AILWFAVLKSGVHATLAGVVI, VAFGILPLFAFANAGISLEGV, MLPLGIALGLLVGKPLGIFTF, FIHIFAVSVLCGIGFTMSIFI, and LGILMGSTTAAIIGYVLLHFS.

This sequence belongs to the NhaA Na(+)/H(+) (TC 2.A.33) antiporter family.

It localises to the cell inner membrane. The catalysed reaction is Na(+)(in) + 2 H(+)(out) = Na(+)(out) + 2 H(+)(in). Na(+)/H(+) antiporter that extrudes sodium in exchange for external protons. In Vibrio campbellii (strain ATCC BAA-1116), this protein is Na(+)/H(+) antiporter NhaA.